The sequence spans 471 residues: Bifunctional protein GlmU (471 aa).

The interval 1–235 is pyrophosphorylase; the sequence is MVAVAILAAG…YQEIFGINNR (235 aa). Residues 7–10, Lys-21, Gln-82, and 87–88 contribute to the UDP-N-acetyl-alpha-D-glucosamine site; these read LAAG and GT. Asp-112 provides a ligand contact to Mg(2+). UDP-N-acetyl-alpha-D-glucosamine is bound by residues Gly-149, Glu-164, Asn-179, and Asn-233. Asn-233 provides a ligand contact to Mg(2+). The segment at 236-256 is linker; the sequence is KHLAKAHEILQVRVKDDWMEA. The tract at residues 257–471 is N-acetyltransferase; sequence GVTLIDPDSI…SKKEENKSSP (215 aa). UDP-N-acetyl-alpha-D-glucosamine is bound by residues Arg-338 and Lys-356. The active-site Proton acceptor is His-368. Positions 371 and 382 each coordinate UDP-N-acetyl-alpha-D-glucosamine. Acetyl-CoA is bound by residues Ala-385, 391–392, Ser-410, Ala-428, and Arg-445; that span reads NY.

In the N-terminal section; belongs to the N-acetylglucosamine-1-phosphate uridyltransferase family. This sequence in the C-terminal section; belongs to the transferase hexapeptide repeat family. Homotrimer. The cofactor is Mg(2+).

It localises to the cytoplasm. The enzyme catalyses alpha-D-glucosamine 1-phosphate + acetyl-CoA = N-acetyl-alpha-D-glucosamine 1-phosphate + CoA + H(+). It carries out the reaction N-acetyl-alpha-D-glucosamine 1-phosphate + UTP + H(+) = UDP-N-acetyl-alpha-D-glucosamine + diphosphate. It participates in nucleotide-sugar biosynthesis; UDP-N-acetyl-alpha-D-glucosamine biosynthesis; N-acetyl-alpha-D-glucosamine 1-phosphate from alpha-D-glucosamine 6-phosphate (route II): step 2/2. Its pathway is nucleotide-sugar biosynthesis; UDP-N-acetyl-alpha-D-glucosamine biosynthesis; UDP-N-acetyl-alpha-D-glucosamine from N-acetyl-alpha-D-glucosamine 1-phosphate: step 1/1. It functions in the pathway bacterial outer membrane biogenesis; LPS lipid A biosynthesis. Its function is as follows. Catalyzes the last two sequential reactions in the de novo biosynthetic pathway for UDP-N-acetylglucosamine (UDP-GlcNAc). The C-terminal domain catalyzes the transfer of acetyl group from acetyl coenzyme A to glucosamine-1-phosphate (GlcN-1-P) to produce N-acetylglucosamine-1-phosphate (GlcNAc-1-P), which is converted into UDP-GlcNAc by the transfer of uridine 5-monophosphate (from uridine 5-triphosphate), a reaction catalyzed by the N-terminal domain. The polypeptide is Bifunctional protein GlmU (Trichodesmium erythraeum (strain IMS101)).